The primary structure comprises 940 residues: UvrABC system protein A (940 aa).

31–38 (GLSGSGKS) contacts ATP. A C4-type zinc finger spans residues 253-280 (CPICGYSMRELEPRLFSFNNPAGACPTC). 2 consecutive ABC transporter domains span residues 310–587 (WDRR…PESL) and 607–937 (ANPE…RFLK). 640-647 (GVSGSGKS) lines the ATP pocket. The C4-type zinc-finger motif lies at 740 to 766 (CEACQGDGVIKVEMHFLPDIYVPCDQC).

This sequence belongs to the ABC transporter superfamily. UvrA family. Forms a heterotetramer with UvrB during the search for lesions.

It localises to the cytoplasm. In terms of biological role, the UvrABC repair system catalyzes the recognition and processing of DNA lesions. UvrA is an ATPase and a DNA-binding protein. A damage recognition complex composed of 2 UvrA and 2 UvrB subunits scans DNA for abnormalities. When the presence of a lesion has been verified by UvrB, the UvrA molecules dissociate. In Escherichia coli O6:H1 (strain CFT073 / ATCC 700928 / UPEC), this protein is UvrABC system protein A.